The chain runs to 129 residues: Small ribosomal subunit protein uS11 (129 aa).

It belongs to the universal ribosomal protein uS11 family. Part of the 30S ribosomal subunit. Interacts with proteins S7 and S18. Binds to IF-3.

Located on the platform of the 30S subunit, it bridges several disparate RNA helices of the 16S rRNA. Forms part of the Shine-Dalgarno cleft in the 70S ribosome. In Levilactobacillus brevis (strain ATCC 367 / BCRC 12310 / CIP 105137 / JCM 1170 / LMG 11437 / NCIMB 947 / NCTC 947) (Lactobacillus brevis), this protein is Small ribosomal subunit protein uS11.